Reading from the N-terminus, the 217-residue chain is Cyclin-P2-1 (217 aa).

It belongs to the cyclin family. Cyclin U/P subfamily.

This Oryza sativa subsp. japonica (Rice) protein is Cyclin-P2-1 (CYCP2-1).